We begin with the raw amino-acid sequence, 78 residues long: Dermaseptin-B1 (78 aa).

An N-terminal signal peptide occupies residues 1 to 22; it reads MDILKKSLFLVLFLGLVSLSIC. Residues 23 to 42 constitute a propeptide that is removed on maturation; sequence EEEKRENEDEEKQDDEQSEM. Q75 carries the glutamine amide modification. A propeptide spanning residues 76-78 is cleaved from the precursor; sequence GEQ.

It belongs to the frog skin active peptide (FSAP) family. Dermaseptin subfamily. In terms of tissue distribution, expressed by the skin glands.

The protein localises to the secreted. In terms of biological role, possesses a potent antimicrobial activity against bacteria, fungi and protozoa. Probably acts by disturbing membrane functions with its amphipathic structure. The chain is Dermaseptin-B1 from Phyllomedusa bicolor (Two-colored leaf frog).